A 183-amino-acid chain; its full sequence is Transposon gamma-delta resolvase (183 aa).

The Resolvase/invertase-type recombinase catalytic domain maps to 2-137 (RLFGYARVST…EGRQEAMAKG (136 aa)). The O-(5'-phospho-DNA)-serine intermediate role is filled by Ser-10. A DNA-binding region (H-T-H motif) is located at residues 161–180 (ASHISKTMNIARSTVYKVIN).

This sequence belongs to the site-specific recombinase resolvase family.

Functionally, this protein catalyzes the site-specific recombination of the transposon and also regulates its frequency of transposition. The chain is Transposon gamma-delta resolvase (tnpR) from Escherichia coli (strain K12).